Reading from the N-terminus, the 677-residue chain is Pentatricopeptide repeat-containing protein At5g39350 (677 aa).

PPR repeat units follow at residues 48-78 (SGHILSTLSVTYALCGHITYARKLFEEMPQS), 79-113 (SLLSYNIVIRMYVREGLYHDAISVFIRMVSEGVKC), 116-146 (DGYTYPFVAKAAGELKSMKLGLVVHGRILRS), 151-181 (DKYVQNALLAMYMNFGKVEMARDVFDVMKNR), 182-216 (DVISWNTMISGYYRNGYMNDALMMFDWMVNESVDL), 217-251 (DHATIVSMLPVCGHLKDLEMGRNVHKLVEEKRLGD), 252-282 (KIEVKNALVNMYLKCGRMDEARFVFDRMERR), 283-317 (DVITWTCMINGYTEDGDVENALELCRLMQFEGVRP), 318-352 (NAVTIASLVSVCGDALKVNDGKCLHGWAVRQQVYS), 353-383 (DIIIETSLISMYAKCKRVDLCFRVFSGASKY), 384-418 (HTGPWSAIIAGCVQNELVSDALGLFKRMRREDVEP), 419-453 (NIATLNSLLPAYAALADLRQAMNIHCYLTKTGFMS), 454-488 (SLDAATGLVHVYSKCGTLESAHKIFNGIQEKHKSK), 489-523 (DVVLWGALISGYGMHGDGHNALQVFMEMVRSGVTP), 524-554 (NEITFTSALNACSHSGLVEEGLTLFRFMLEH), and 560-590 (RSNHYTCIVDLLGRAGRLDEAYNLITTIPFE). The segment at 595 to 670 (VWGALLAACV…KPGHSTIEIR (76 aa)) is type E motif.

Belongs to the PPR family. PCMP-E subfamily.

The chain is Pentatricopeptide repeat-containing protein At5g39350 (PCMP-E16) from Arabidopsis thaliana (Mouse-ear cress).